The primary structure comprises 338 residues: Phosphate transport system permease protein PstC 1 (338 aa).

The next 8 helical transmembrane spans lie at 19–39 (GGIG…VLVI), 93–113 (TSAI…LVIV), 123–143 (AVGI…GLWG), 144–164 (AMTF…HNAP), 181–201 (GMLV…ATTT), 232–252 (LPWV…RALG), 254–274 (TMAV…NIYA), and 295–315 (TNFA…ITLL). Positions 87 to 320 (IVGTLATSAI…VITLLTNVAA (234 aa)) constitute an ABC transmembrane type-1 domain.

This sequence belongs to the binding-protein-dependent transport system permease family. CysTW subfamily.

The protein resides in the cell membrane. Part of the binding-protein-dependent transport system for phosphate; probably responsible for the translocation of the substrate across the membrane. This chain is Phosphate transport system permease protein PstC 1 (pstC1), found in Mycobacterium bovis (strain ATCC BAA-935 / AF2122/97).